The sequence spans 1342 residues: DNA-directed RNA polymerase subunit beta (1342 aa).

It belongs to the RNA polymerase beta chain family. The RNAP catalytic core consists of 2 alpha, 1 beta, 1 beta' and 1 omega subunit. When a sigma factor is associated with the core the holoenzyme is formed, which can initiate transcription.

The catalysed reaction is RNA(n) + a ribonucleoside 5'-triphosphate = RNA(n+1) + diphosphate. Functionally, DNA-dependent RNA polymerase catalyzes the transcription of DNA into RNA using the four ribonucleoside triphosphates as substrates. The chain is DNA-directed RNA polymerase subunit beta from Enterobacter sp. (strain 638).